The primary structure comprises 695 residues: Phenoloxidase subunit 2 (695 aa).

Cu cation is bound by residues His215, His219, and His245. The Proton acceptor role is filled by Glu353. Positions 368, 372, and 408 each coordinate Cu cation. 2 disulfides stabilise this stretch: Cys586-Cys630 and Cys588-Cys637.

In terms of assembly, heterodimer. Forms a complex with an interleukin 1-like protein as a consequence of a host defense response. Cu(2+) is required as a cofactor. The N-terminus is blocked. Synthesized by oenocytoids, a type of hemocyte, and released into the hemolymph plasma.

Its subcellular location is the secreted. It catalyses the reaction 2 L-dopa + O2 = 2 L-dopaquinone + 2 H2O. It carries out the reaction L-tyrosine + O2 = L-dopaquinone + H2O. Its activity is regulated as follows. Activated by immulectin and lipopolysaccharide. Its function is as follows. This is a copper-containing oxidase that functions in the formation of pigments such as melanins and other polyphenolic compounds. Catalyzes the rate-limiting conversions of tyrosine to DOPA, DOPA to DOPA-quinone and possibly 5,6 dihydroxyindole to indole-5'6 quinone. Binds to the surface of hemocytes and is involved in hemocyte melanization. The chain is Phenoloxidase subunit 2 from Manduca sexta (Tobacco hawkmoth).